A 301-amino-acid polypeptide reads, in one-letter code: UDP-N-acetylenolpyruvoylglucosamine reductase 1 (301 aa).

The FAD-binding PCMH-type domain occupies 29 to 196; sequence KIGGPADILI…LEAEFQLQIG (168 aa). Arginine 174 is a catalytic residue. Catalysis depends on serine 225, which acts as the Proton donor. Residue glutamate 295 is part of the active site.

Belongs to the MurB family. FAD is required as a cofactor.

It is found in the cytoplasm. It catalyses the reaction UDP-N-acetyl-alpha-D-muramate + NADP(+) = UDP-N-acetyl-3-O-(1-carboxyvinyl)-alpha-D-glucosamine + NADPH + H(+). It functions in the pathway cell wall biogenesis; peptidoglycan biosynthesis. In terms of biological role, cell wall formation. In Bacillus cereus (strain ZK / E33L), this protein is UDP-N-acetylenolpyruvoylglucosamine reductase 1.